The following is a 509-amino-acid chain: ATP synthase subunit alpha (509 aa).

An ATP-binding site is contributed by 169–176 (GDRQTGKT).

This sequence belongs to the ATPase alpha/beta chains family. As to quaternary structure, F-type ATPases have 2 components, CF(1) - the catalytic core - and CF(0) - the membrane proton channel. CF(1) has five subunits: alpha(3), beta(3), gamma(1), delta(1), epsilon(1). CF(0) has three main subunits: a(1), b(2) and c(9-12). The alpha and beta chains form an alternating ring which encloses part of the gamma chain. CF(1) is attached to CF(0) by a central stalk formed by the gamma and epsilon chains, while a peripheral stalk is formed by the delta and b chains.

Its subcellular location is the cell inner membrane. It catalyses the reaction ATP + H2O + 4 H(+)(in) = ADP + phosphate + 5 H(+)(out). Functionally, produces ATP from ADP in the presence of a proton gradient across the membrane. The alpha chain is a regulatory subunit. This chain is ATP synthase subunit alpha, found in Brucella canis (strain ATCC 23365 / NCTC 10854 / RM-666).